The following is a 203-amino-acid chain: MKKNRISKNWINKQKRDIYVRQSQVDGYRARSAYKLIEIDEKFKIFKNGISVIDLGASPGSWSQYISRTVKSGRLVSIDLKGMEEIENTIQIKGDFTDLESQEKIKALFKSKVDVVVSDMAVNTTGIKDIDAIYTGELAMEAMNFSKEMLVKEGRFVSKIFLGSSFNEIVALGKKLFKEVKVFKPKSSRKESKESFIICKILR.

S-adenosyl-L-methionine is bound by residues G60, W62, D79, D95, and D119. Residue K159 is the Proton acceptor of the active site.

Belongs to the class I-like SAM-binding methyltransferase superfamily. RNA methyltransferase RlmE family.

It localises to the cytoplasm. The enzyme catalyses uridine(2552) in 23S rRNA + S-adenosyl-L-methionine = 2'-O-methyluridine(2552) in 23S rRNA + S-adenosyl-L-homocysteine + H(+). Specifically methylates the uridine in position 2552 of 23S rRNA at the 2'-O position of the ribose in the fully assembled 50S ribosomal subunit. In Pelagibacter ubique (strain HTCC1062), this protein is Ribosomal RNA large subunit methyltransferase E.